A 751-amino-acid chain; its full sequence is Photosystem I P700 chlorophyll a apoprotein A1 (751 aa).

A run of 8 helical transmembrane segments spans residues 72 to 95 (IFSAHFGHLAVVFVWLSGMYFHGA), 158 to 181 (LYCTAIGGLVMAALMLFAGWFHYH), 197 to 221 (MNHHLAGLLGLGSLGWAGHQIHVSM), 293 to 311 (TAHHHLAIAVLFIIAGHMY), 348 to 371 (WHAQLAINLALLGSLTIIVAQHMY), 387 to 413 (LSLFTHHMWIGGFLIVGAGAHGAIFMV), 435 to 457 (AIISHLNWVCIFLGFHSFGLYIH), and 532 to 550 (FMVHHIHAFTIHVTALILL). [4Fe-4S] cluster contacts are provided by Cys574 and Cys583. Transmembrane regions (helical) follow at residues 590–611 (HVFLGLFWMYNSLSIVIFHFSW) and 665–687 (LSAYGIMFLAGHFVFAFSLMFLF). A chlorophyll a'-binding site is contributed by His676. Chlorophyll a-binding residues include Met684 and Tyr692. Trp693 contacts phylloquinone. Residues 725–745 (AVGVAHYLLGGIVTTWAFFLA) traverse the membrane as a helical segment.

It belongs to the PsaA/PsaB family. In terms of assembly, the PsaA/B heterodimer binds the P700 chlorophyll special pair and subsequent electron acceptors. PSI consists of a core antenna complex that captures photons, and an electron transfer chain that converts photonic excitation into a charge separation. The cyanobacterial PSI reaction center is composed of one copy each of PsaA,B,C,D,E,F,I,J,K,L,M and X, and forms trimeric complexes. It depends on PSI electron transfer chain: 5 chlorophyll a, 1 chlorophyll a', 2 phylloquinones and 3 4Fe-4S clusters. PSI core antenna: 90 chlorophyll a, 22 carotenoids, 3 phospholipids and 1 galactolipid. P700 is a chlorophyll a/chlorophyll a' dimer, A0 is one or more chlorophyll a, A1 is one or both phylloquinones and FX is a shared 4Fe-4S iron-sulfur center. as a cofactor.

It is found in the cellular thylakoid membrane. It catalyses the reaction reduced [plastocyanin] + hnu + oxidized [2Fe-2S]-[ferredoxin] = oxidized [plastocyanin] + reduced [2Fe-2S]-[ferredoxin]. In terms of biological role, psaA and PsaB bind P700, the primary electron donor of photosystem I (PSI), as well as the electron acceptors A0, A1 and FX. PSI is a plastocyanin/cytochrome c6-ferredoxin oxidoreductase, converting photonic excitation into a charge separation, which transfers an electron from the donor P700 chlorophyll pair to the spectroscopically characterized acceptors A0, A1, FX, FA and FB in turn. Oxidized P700 is reduced on the lumenal side of the thylakoid membrane by plastocyanin or cytochrome c6. The protein is Photosystem I P700 chlorophyll a apoprotein A1 of Synechocystis sp. (strain ATCC 27184 / PCC 6803 / Kazusa).